Consider the following 131-residue polypeptide: Protein FAM107B (131 aa).

Alanine 2 carries the post-translational modification N-acetylalanine. Disordered regions lie at residues 39 to 78 and 100 to 131; these read MNQK…KKKS and KLQE…AQES. At lysine 50 the chain carries N6-acetyllysine. The segment covering 52-78 has biased composition (basic and acidic residues); that stretch reads ELQKVMEKRRRDQVIKQKEEEAQKKKS. Residues 61–112 adopt a coiled-coil conformation; sequence RRDQVIKQKEEEAQKKKSDLEIELLKRQQKLEQLELEKQKLQEEQENAPEFV.

The protein belongs to the FAM107 family.

The polypeptide is Protein FAM107B (Rattus norvegicus (Rat)).